The sequence spans 404 residues: Serine/threonine transporter SstT (404 aa).

The next 8 membrane-spanning stretches (helical) occupy residues 17–37 (IGIG…LTGF), 39–59 (ILGK…VFAL), 75–95 (MTLI…VAVL), 138–158 (ALAT…GLAL), 179–199 (IVVW…FTTI), 212–232 (FLIL…NPLI), 287–307 (IPLG…VLTL), and 313–333 (FGIP…AVSA).

It belongs to the dicarboxylate/amino acid:cation symporter (DAACS) (TC 2.A.23) family.

It localises to the cell membrane. The catalysed reaction is L-serine(in) + Na(+)(in) = L-serine(out) + Na(+)(out). It catalyses the reaction L-threonine(in) + Na(+)(in) = L-threonine(out) + Na(+)(out). Involved in the import of serine and threonine into the cell, with the concomitant import of sodium (symport system). This is Serine/threonine transporter SstT from Streptococcus pyogenes serotype M2 (strain MGAS10270).